The following is a 343-amino-acid chain: GTPase Obg (343 aa).

The 158-residue stretch at 1–158 folds into the Obg domain; the sequence is MFIDEAKIRV…FTLRLELKVL (158 aa). The disordered stretch occupies residues 121–140; the sequence is RGGRGNQHFATSTHQAPREH. The OBG-type G domain maps to 159–333; sequence ADIGIVGYPN…LKYAMAERVR (175 aa). GTP-binding positions include 165–172, 190–194, 215–218, 286–289, and 314–316; these read GYPNVGKS, FTTLE, DIPG, SKID, and SAV. The Mg(2+) site is built by S172 and T192.

It belongs to the TRAFAC class OBG-HflX-like GTPase superfamily. OBG GTPase family. As to quaternary structure, monomer. Requires Mg(2+) as cofactor.

The protein localises to the cytoplasm. In terms of biological role, an essential GTPase which binds GTP, GDP and possibly (p)ppGpp with moderate affinity, with high nucleotide exchange rates and a fairly low GTP hydrolysis rate. Plays a role in control of the cell cycle, stress response, ribosome biogenesis and in those bacteria that undergo differentiation, in morphogenesis control. The protein is GTPase Obg of Acidobacterium capsulatum (strain ATCC 51196 / DSM 11244 / BCRC 80197 / JCM 7670 / NBRC 15755 / NCIMB 13165 / 161).